A 317-amino-acid polypeptide reads, in one-letter code: Ribosomal protein L11 methyltransferase (317 aa).

Residues Thr158, Gly179, Asp201, and Asn244 each contribute to the S-adenosyl-L-methionine site.

This sequence belongs to the methyltransferase superfamily. PrmA family.

Its subcellular location is the cytoplasm. The enzyme catalyses L-lysyl-[protein] + 3 S-adenosyl-L-methionine = N(6),N(6),N(6)-trimethyl-L-lysyl-[protein] + 3 S-adenosyl-L-homocysteine + 3 H(+). Methylates ribosomal protein L11. The sequence is that of Ribosomal protein L11 methyltransferase from Streptococcus pyogenes serotype M1.